Here is a 222-residue protein sequence, read N- to C-terminus: Glutathione S-transferase A6 (222 aa).

The GST N-terminal domain maps to 3 to 83; it reads EKPLFHYDEA…YFSSKYNLYG (81 aa). Glutathione-binding positions include tyrosine 9, arginine 45, 54 to 55, and 67 to 68; these read QV and QT. The GST C-terminal domain maps to 85-208; the sequence is DMKERALIDM…QPGSQRQPPV (124 aa).

This sequence belongs to the GST superfamily. Alpha family. Homodimer or heterodimer of GSTA1 and GSTA2.

The protein localises to the cytoplasm. The catalysed reaction is RX + glutathione = an S-substituted glutathione + a halide anion + H(+). Conjugation of reduced glutathione to a wide number of exogenous and endogenous hydrophobic electrophiles. The sequence is that of Glutathione S-transferase A6 (Gsta6) from Rattus norvegicus (Rat).